We begin with the raw amino-acid sequence, 239 residues long: Ribonuclease PH (239 aa).

Phosphate is bound by residues R87 and 125–127 (GTR).

This sequence belongs to the RNase PH family. As to quaternary structure, homohexameric ring arranged as a trimer of dimers.

It carries out the reaction tRNA(n+1) + phosphate = tRNA(n) + a ribonucleoside 5'-diphosphate. Phosphorolytic 3'-5' exoribonuclease that plays an important role in tRNA 3'-end maturation. Removes nucleotide residues following the 3'-CCA terminus of tRNAs; can also add nucleotides to the ends of RNA molecules by using nucleoside diphosphates as substrates, but this may not be physiologically important. Probably plays a role in initiation of 16S rRNA degradation (leading to ribosome degradation) during starvation. This is Ribonuclease PH from Syntrophomonas wolfei subsp. wolfei (strain DSM 2245B / Goettingen).